A 55-amino-acid polypeptide reads, in one-letter code: Large ribosomal subunit protein bL33 (55 aa).

The protein belongs to the bacterial ribosomal protein bL33 family.

The protein is Large ribosomal subunit protein bL33 of Xanthomonas axonopodis pv. citri (strain 306).